The sequence spans 1173 residues: MEPNSLQWVGSPCGLHGPYIFYKAFQFHLEGKPRILSLGDFFFVRCTPKDPICIAELQLLWEERTSRQLLSSSKLYFLPEDTPQGRNSDHGEDEVIAVSEKVIVKLEDLVKWVHSDFSKWRCGLQAGSVKTESLGRNGQKEALLKYRQSTLNSGLNFKDVLKEKADLDCLGEDEEETNVIVLSYPQYCRYRSMLKRIQDKPSSILTDQFALALGGIAVVSKNPQILYCRDTFDHPTLIENESICDEFAPNLKGRPRKKKPCPQRRDSFSGGKDPNNNSDGKSVAKVKCEARSALNKPKNNHNNCKKVSNEEKPKVAIGEECRADEQAFLVALYKYMKERKTPIERIPYLGFKQINLWTMFQAAQKLGGYETITARRQWKHIYDELGGNPGSTSAATCTRRHYERLILPYERFIKGEEDKPLPPIKPRKQENNSQENENKTKVSGAKRIKHEISKSKKEKENAPKPQDASEVSSEQEKEQETVNQKSITEPLPIADTKKKLEGYQDFAARPLVSQADPEKDSETDQGANSEKVAEEAGEKGPAPPLASAPLAPTPGTGKQSLTSPSALVDSKEPKPCCFTESPENELQEASFPGFSTTQPPLANQSEVEDDKLPAMADYIANCTVKVDQLGSDDIHNALKQTPKVLVVQSFDMFKDKDLTGPMNENHGLNYTPLLYSRGNPGIMSPLAKKKLLSQVSGASLSSSYPYGSPPPLISKKKVIAREDRCSSLSQAHHGQSTDHMAVNRPSVIQHVQSFRSKPSEERKISDIFKHDKLSRSEPRFSFSKHHLSPSKKSRGRRTVEKRALPHSHMPSFLADFYSSPHLHSLYRHTEHHLHNEQTSKYPCRDMYRETENSSFPSHKHQEKLHVNYLASLHLQDKKSAAVEAPTDDQPTDLSLPKNPHKPTGKALGLAHSAPGPQESKGTSQFQVINSQSRDCHPKACRVSPMTMSAPKKYPEALSRSGKPHPVRLENFRKMDSMVHPILHRKMSPQNIGAARPIKRSLEDLDLVIAGKKARAVSPLDPAKEVSGKEKASEQESEGSKAAHSGHSGGTSEGHKLPLSSPIFPGLYSGSLCSSGLNSRLPAGYSHSLQYLKNQAVLSPLMQPLAFHSLVMQRGIFTSPTNSQQLYRHLAAATPVGSSYGDLLHNSIYPLAAINPQAAFPSSQLSSVHPSTKL.

A Glycyl lysine isopeptide (Lys-Gly) (interchain with G-Cter in SUMO2) cross-link involves residue K130. The interval P249–V283 is disordered. A compositionally biased stretch (basic residues) spans G253–P262. S267 bears the Phosphoserine mark. The ARID domain maps to R322 to K414. K340 is subject to N6,N6-dimethyllysine. Residues E416–V607 form a disordered region. K449 is covalently cross-linked (Glycyl lysine isopeptide (Lys-Gly) (interchain with G-Cter in SUMO2)). Positions H450 to A462 are enriched in basic and acidic residues. Glycyl lysine isopeptide (Lys-Gly) (interchain with G-Cter in SUMO2) cross-links involve residues K497 and K499. Positions S547–G557 are enriched in low complexity. Polar residues predominate over residues G593–S605. Glycyl lysine isopeptide (Lys-Gly) (interchain with G-Cter in SUMO2) cross-links involve residues K763 and K769. Disordered regions lie at residues E777–R802, K877–Q924, and H936–P965. The segment covering F782–R796 has biased composition (basic residues). Glycyl lysine isopeptide (Lys-Gly) (interchain with G-Cter in SUMO2) cross-links involve residues K878, K901, K905, and K920. Residues K973, K985, and K998 each participate in a glycyl lysine isopeptide (Lys-Gly) (interchain with G-Cter in SUMO2) cross-link. At S1017 the chain carries Phosphoserine. The tract at residues S1017–K1055 is disordered. Basic and acidic residues predominate over residues P1021–K1040. Glycyl lysine isopeptide (Lys-Gly) (interchain with G-Cter in SUMO2) cross-links involve residues K1040 and K1055. S1118 carries the post-translational modification Phosphoserine.

It belongs to the ARID5B family. In terms of processing, methylation at Lys-340 prevents DNA-binding. Demethylation by PHF2 promotes recruitment of the PHF2-ARID5B complex to promoters.

The protein resides in the nucleus. Transcription coactivator that binds to the 5'-AATA[CT]-3' core sequence and plays a key role in adipogenesis and liver development. Acts by forming a complex with phosphorylated PHF2, which mediates demethylation at Lys-340, leading to target the PHF2-ARID5B complex to target promoters, where PHF2 mediates demethylation of dimethylated 'Lys-9' of histone H3 (H3K9me2), followed by transcription activation of target genes. The PHF2-ARID5B complex acts as a coactivator of HNF4A in liver. Required for adipogenesis: regulates triglyceride metabolism in adipocytes by regulating expression of adipogenic genes. Overexpression leads to induction of smooth muscle marker genes, suggesting that it may also act as a regulator of smooth muscle cell differentiation and proliferation. In Bos taurus (Bovine), this protein is AT-rich interactive domain-containing protein 5B (ARID5B).